The chain runs to 179 residues: Large ribosomal subunit protein uL5 (179 aa).

This sequence belongs to the universal ribosomal protein uL5 family. Part of the 50S ribosomal subunit; part of the 5S rRNA/L5/L18/L25 subcomplex. Contacts the 5S rRNA and the P site tRNA. Forms a bridge to the 30S subunit in the 70S ribosome.

This is one of the proteins that bind and probably mediate the attachment of the 5S RNA into the large ribosomal subunit, where it forms part of the central protuberance. In the 70S ribosome it contacts protein S13 of the 30S subunit (bridge B1b), connecting the 2 subunits; this bridge is implicated in subunit movement. Contacts the P site tRNA; the 5S rRNA and some of its associated proteins might help stabilize positioning of ribosome-bound tRNAs. In Rickettsia rickettsii (strain Iowa), this protein is Large ribosomal subunit protein uL5.